A 458-amino-acid polypeptide reads, in one-letter code: Monomethylamine methyltransferase MtmB1 (458 aa).

Position 202 (Pyl202) is a non-standard amino acid, pyrrolysine.

The protein belongs to the monomethylamine methyltransferase family. Dimer of homotrimers. Can form a complex with MtmC (MtmC1 or MtmC2).

It carries out the reaction Co(I)-[methylamine-specific corrinoid protein] + methylamine + H(+) = methyl-Co(III)-[methylamine-specific corrinoid protein] + NH4(+). Its pathway is one-carbon metabolism; methanogenesis from methylamine. In terms of biological role, catalyzes the transfer of the methyl group from monomethylamine to the corrinoid cofactor of MtmC (MtmC1 or MtmC2). This chain is Monomethylamine methyltransferase MtmB1 (mtmB1), found in Methanosarcina barkeri.